A 395-amino-acid polypeptide reads, in one-letter code: Mevalonate kinase (395 aa).

ATP contacts are provided by residues Lys13, Asn55, Asn104, Ser135, and 140–146; that span reads GAGLGSS. Ser146 (proton donor) is an active-site residue. Residues Ser146 and Glu193 each coordinate Mg(2+). Residue Asp204 is the Proton acceptor of the active site.

The protein belongs to the GHMP kinase family. Mevalonate kinase subfamily. As to quaternary structure, homodimer. The cofactor is Mg(2+).

The protein resides in the cytoplasm. It localises to the peroxisome. It catalyses the reaction (R)-mevalonate + ATP = (R)-5-phosphomevalonate + ADP + H(+). Its pathway is isoprenoid biosynthesis; isopentenyl diphosphate biosynthesis via mevalonate pathway; isopentenyl diphosphate from (R)-mevalonate: step 1/3. Its activity is regulated as follows. Farnesyl pyrophosphate and geranyl pyrophosphate inhibit mevalonate kinase activity by binding competitively at the ATP-binding sites. In terms of biological role, catalyzes the phosphorylation of mevalonate to mevalonate 5-phosphate, a key step in isoprenoid and cholesterol biosynthesis. This is Mevalonate kinase from Mus musculus (Mouse).